Here is a 242-residue protein sequence, read N- to C-terminus: Zinc import ATP-binding protein ZnuC (242 aa).

An ABC transporter domain is found at 24–241; it reads INVKDLSFAY…EKFLKMFSSY (218 aa). Position 56–63 (56–63) interacts with ATP; the sequence is GPNGGGKT.

It belongs to the ABC transporter superfamily. Zinc importer (TC 3.A.1.15.5) family. The complex is composed of two ATP-binding proteins (ZnuC), two transmembrane proteins (ZnuB) and a solute-binding protein (ZnuA).

It localises to the cell inner membrane. The enzyme catalyses Zn(2+)(out) + ATP(in) + H2O(in) = Zn(2+)(in) + ADP(in) + phosphate(in) + H(+)(in). Functionally, part of the ABC transporter complex ZnuABC involved in zinc import. Responsible for energy coupling to the transport system. The sequence is that of Zinc import ATP-binding protein ZnuC from Ehrlichia ruminantium (strain Gardel).